We begin with the raw amino-acid sequence, 391 residues long: NAD(P)H-quinone oxidoreductase subunit H, chloroplastic (391 aa).

This sequence belongs to the complex I 49 kDa subunit family. As to quaternary structure, NDH is composed of at least 16 different subunits, 5 of which are encoded in the nucleus.

The protein resides in the plastid. It localises to the chloroplast thylakoid membrane. It catalyses the reaction a plastoquinone + NADH + (n+1) H(+)(in) = a plastoquinol + NAD(+) + n H(+)(out). It carries out the reaction a plastoquinone + NADPH + (n+1) H(+)(in) = a plastoquinol + NADP(+) + n H(+)(out). In terms of biological role, NDH shuttles electrons from NAD(P)H:plastoquinone, via FMN and iron-sulfur (Fe-S) centers, to quinones in the photosynthetic chain and possibly in a chloroplast respiratory chain. The immediate electron acceptor for the enzyme in this species is believed to be plastoquinone. Couples the redox reaction to proton translocation, and thus conserves the redox energy in a proton gradient. This Nephroselmis olivacea (Green alga) protein is NAD(P)H-quinone oxidoreductase subunit H, chloroplastic.